A 335-amino-acid chain; its full sequence is MSLPFLGPMSLSGFEHSWFFLFLLVVAGLAALYILMQLARHGRMLRFANMELLESVAPKRPSTWRHLPAILLVASLVLFTIAMAGPTNDVRIPRNRAVVMLVIDVSQSMRATDVAPNRMAAAQEAAKQFADELTPGINLGLIAYAGTATVLVSPTTNREATKNALDKLQFADRTATGEGIFTALQVQAIATVGAVIAGDKPPPARIVLFSDGKETMPTNPDNPKGAFTAARTAKDQGVPISTISFGTPYGFVEINDQRQPVPVDDETLKKVAQLSGGNAYNARSLQELKSVYATLQQQIGYETIKGDASVGWVRLGALVLRLAADALLINRRLPT.

A run of 2 helical transmembrane segments spans residues 18 to 38 (WFFLFLLVVAGLAALYILMQL) and 67 to 87 (LPAILLVASLVLFTIAMAGPT). The 198-residue stretch at 98–295 (VVMLVIDVSQ…QELKSVYATL (198 aa)) folds into the VWFA domain. A helical membrane pass occupies residues 309-329 (SVGWVRLGALVLRLAADALLI).

This sequence belongs to the UPF0353 family.

It localises to the cell membrane. The chain is UPF0353 protein MAV335 from Mycobacterium avium.